The following is a 483-amino-acid chain: Glutamyl-tRNA(Gln) amidotransferase subunit A (483 aa).

Residues Lys76 and Ser151 each act as charge relay system in the active site. Ser175 acts as the Acyl-ester intermediate in catalysis.

This sequence belongs to the amidase family. GatA subfamily. As to quaternary structure, heterotrimer of A, B and C subunits.

It catalyses the reaction L-glutamyl-tRNA(Gln) + L-glutamine + ATP + H2O = L-glutaminyl-tRNA(Gln) + L-glutamate + ADP + phosphate + H(+). Allows the formation of correctly charged Gln-tRNA(Gln) through the transamidation of misacylated Glu-tRNA(Gln) in organisms which lack glutaminyl-tRNA synthetase. The reaction takes place in the presence of glutamine and ATP through an activated gamma-phospho-Glu-tRNA(Gln). This chain is Glutamyl-tRNA(Gln) amidotransferase subunit A, found in Pseudomonas fluorescens (strain ATCC BAA-477 / NRRL B-23932 / Pf-5).